The following is a 447-amino-acid chain: MTKVITRFAPSPTGMLHVGNIRAALLNWLYAKKHNGQFILRFDDTDLERSKQEYKDAIEEDLKFLNINWDQTFNQLSRLSRYDEIKNLLLDKKRLYACYETPEELELKRKFQLSKGLPPIYDRASLNLTEEQAKKYIEQGRKPHYRFLVNHELINWHDMIKGEVKYDGKALSDPIVIRADGSMTYMLCSVIDDIDYDITHIIRGEDHVSNTAIQIQMFEALNTTPPTFGHLSLIINKDEKISKRVGGFEIATLRKEVGIEAMAIASFFSLLGSSAQILPYKSMEKLANQFEISSFSKSPTIYQPEDLERLNHKLLISLDFDTVKERLKEINAEYIDENFWLSVSPNLQKLRDVKDWWEICHQTPNVENLNLDKEYLKQAAELLPKGEITKDSWSIWTKEITNITGRKGKELFLPLRLALTARESGPEITGVLPLIDREEIIKRLTSA.

The 'HIGH' region signature appears at 10–20 (PSPTGMLHVGN). A 'KMSKS' region motif is present at residues 240–244 (KISKR). K243 contacts ATP.

The protein belongs to the class-I aminoacyl-tRNA synthetase family. Glutamate--tRNA ligase type 1 subfamily. Monomer.

It is found in the cytoplasm. The catalysed reaction is tRNA(Glu) + L-glutamate + ATP = L-glutamyl-tRNA(Glu) + AMP + diphosphate. Catalyzes the attachment of glutamate to tRNA(Glu) in a two-step reaction: glutamate is first activated by ATP to form Glu-AMP and then transferred to the acceptor end of tRNA(Glu). The sequence is that of Glutamate--tRNA ligase 1 from Rickettsia massiliae (strain Mtu5).